Here is a 398-residue protein sequence, read N- to C-terminus: Na(+)/H(+) antiporter NhaA 2 (398 aa).

11 consecutive transmembrane segments (helical) span residues isoleucine 17 to leucine 37, leucine 59 to valine 79, serine 95 to phenylalanine 115, glycine 125 to glycine 145, valine 154 to phenylalanine 174, leucine 179 to leucine 199, leucine 213 to isoleucine 233, phenylalanine 262 to leucine 282, proline 288 to phenylalanine 308, alanine 331 to phenylalanine 351, and leucine 364 to valine 384.

Belongs to the NhaA Na(+)/H(+) (TC 2.A.33) antiporter family.

The protein resides in the cell inner membrane. It carries out the reaction Na(+)(in) + 2 H(+)(out) = Na(+)(out) + 2 H(+)(in). Functionally, na(+)/H(+) antiporter that extrudes sodium in exchange for external protons. This Shewanella denitrificans (strain OS217 / ATCC BAA-1090 / DSM 15013) protein is Na(+)/H(+) antiporter NhaA 2.